A 235-amino-acid polypeptide reads, in one-letter code: Probable ribonuclease P protein subunit 3 (235 aa).

Belongs to the eukaryotic/archaeal RNase P protein component 3 family.

It is found in the nucleus. It carries out the reaction Endonucleolytic cleavage of RNA, removing 5'-extranucleotides from tRNA precursor.. Part of ribonuclease P, a protein complex that generates mature tRNA molecules by cleaving their 5'-ends. This chain is Probable ribonuclease P protein subunit 3, found in Schizosaccharomyces pombe (strain 972 / ATCC 24843) (Fission yeast).